The sequence spans 182 residues: Guanylate kinase (182 aa).

The region spanning 2 to 180 (GTLTVITGPS…ALLKLEGLMG (179 aa)) is the Guanylate kinase-like domain. ATP is bound at residue 9–16 (GPSGVGKG).

The protein belongs to the guanylate kinase family.

It localises to the cytoplasm. It carries out the reaction GMP + ATP = GDP + ADP. The catalysed reaction is dZMP + ATP = dZDP + ADP. The protein operates within purine metabolism. Functionally, essential for recycling GMP and indirectly, cGMP. (Microbial infection) Catalyzes the phosphorylation of dZMP to dZDP, when the bacterium is infected by a phage that produces the substrate for the synthesis of dZTP (2- amino-2'-deoxyadenosine 5'-triphosphate), which is then used by the phage as a DNA polymerase substrate. The sequence is that of Guanylate kinase from Parasynechococcus marenigrum (strain WH8102).